The sequence spans 167 residues: KHFSTTAPEKNLPVLLALIGIWYNNFFGAETEAILPYDQYMHRFAAYFQQGNMESNGKYVDRNGNAVDYQTGPIIWGEPGTNGQHAFYQLIHQGTKMVPCDFIAPAITQNPLSDHHPKLLSNFFAQTEALAFGKSREVVEQEYRDQGKDPAALEHVVPFKVFEGNRP.

Glu54 (proton donor) is an active-site residue. Residue His85 is part of the active site.

This sequence belongs to the GPI family.

The protein localises to the cytoplasm. It carries out the reaction alpha-D-glucose 6-phosphate = beta-D-fructose 6-phosphate. Its pathway is carbohydrate biosynthesis; gluconeogenesis. It participates in carbohydrate degradation; glycolysis; D-glyceraldehyde 3-phosphate and glycerone phosphate from D-glucose: step 2/4. In terms of biological role, catalyzes the reversible isomerization of glucose-6-phosphate to fructose-6-phosphate. In Klebsiella oxytoca, this protein is Glucose-6-phosphate isomerase.